A 92-amino-acid polypeptide reads, in one-letter code: YcgL domain-containing protein VC0395_A1544/VC395_2072 (92 aa).

The 84-residue stretch at 1 to 84 folds into the YcgL domain; that stretch reads MLCSIYKSPK…PPENLLEQHK (84 aa). Residues 71–92 are disordered; the sequence is QLPPPPENLLEQHKERKARQTP.

This is YcgL domain-containing protein VC0395_A1544/VC395_2072 from Vibrio cholerae serotype O1 (strain ATCC 39541 / Classical Ogawa 395 / O395).